The following is a 393-amino-acid chain: NAD(P)H-quinone oxidoreductase subunit H, chloroplastic (393 aa).

The protein belongs to the complex I 49 kDa subunit family. NDH is composed of at least 16 different subunits, 5 of which are encoded in the nucleus. Interacts with the chaperonin CNP60B4 subunit.

It localises to the plastid. The protein localises to the chloroplast thylakoid membrane. The enzyme catalyses a plastoquinone + NADH + (n+1) H(+)(in) = a plastoquinol + NAD(+) + n H(+)(out). It catalyses the reaction a plastoquinone + NADPH + (n+1) H(+)(in) = a plastoquinol + NADP(+) + n H(+)(out). Its function is as follows. NDH shuttles electrons from NAD(P)H:plastoquinone, via FMN and iron-sulfur (Fe-S) centers, to quinones in the photosynthetic chain and possibly in a chloroplast respiratory chain. The immediate electron acceptor for the enzyme in this species is believed to be plastoquinone. Couples the redox reaction to proton translocation, and thus conserves the redox energy in a proton gradient. This Arabidopsis thaliana (Mouse-ear cress) protein is NAD(P)H-quinone oxidoreductase subunit H, chloroplastic.